Consider the following 234-residue polypeptide: Homeobox protein ceh-51 (234 aa).

Disordered regions lie at residues 128–154 (PPSFLHHQHQQHPRAPSEKRRGARTPF) and 209–234 (QIKQDAVQQQKSAKEEAEEDQKHVIS). Residues 147-206 (RRGARTPFSDSQLYALRTRFEQCDTIKVDERRKLGAVIGLSPEQIKIWFQNRRFKLRKEK) constitute a DNA-binding region (homeobox). Over residues 220–234 (SAKEEAEEDQKHVIS) the composition is skewed to basic and acidic residues.

The protein belongs to the NK-2 homeobox family.

It is found in the nucleus. Its function is as follows. Required for mesoderm development, including specification of muscle and coelomocyte precursors. In Caenorhabditis elegans, this protein is Homeobox protein ceh-51.